A 463-amino-acid polypeptide reads, in one-letter code: Bifunctional protein HldE (463 aa).

The interval 1–313 (MTGPMAVRTD…RALAALPDTD (313 aa)) is ribokinase. D258 is a catalytic residue. The segment at 331–463 (AAGGCFDLLH…LLARAAEGAR (133 aa)) is cytidylyltransferase.

The protein in the N-terminal section; belongs to the carbohydrate kinase PfkB family. This sequence in the C-terminal section; belongs to the cytidylyltransferase family. In terms of assembly, homodimer.

It carries out the reaction D-glycero-beta-D-manno-heptose 7-phosphate + ATP = D-glycero-beta-D-manno-heptose 1,7-bisphosphate + ADP + H(+). The catalysed reaction is D-glycero-beta-D-manno-heptose 1-phosphate + ATP + H(+) = ADP-D-glycero-beta-D-manno-heptose + diphosphate. Its pathway is nucleotide-sugar biosynthesis; ADP-L-glycero-beta-D-manno-heptose biosynthesis; ADP-L-glycero-beta-D-manno-heptose from D-glycero-beta-D-manno-heptose 7-phosphate: step 1/4. It participates in nucleotide-sugar biosynthesis; ADP-L-glycero-beta-D-manno-heptose biosynthesis; ADP-L-glycero-beta-D-manno-heptose from D-glycero-beta-D-manno-heptose 7-phosphate: step 3/4. Functionally, catalyzes the phosphorylation of D-glycero-D-manno-heptose 7-phosphate at the C-1 position to selectively form D-glycero-beta-D-manno-heptose-1,7-bisphosphate. Its function is as follows. Catalyzes the ADP transfer from ATP to D-glycero-beta-D-manno-heptose 1-phosphate, yielding ADP-D-glycero-beta-D-manno-heptose. The chain is Bifunctional protein HldE from Streptomyces coelicolor (strain ATCC BAA-471 / A3(2) / M145).